Reading from the N-terminus, the 548-residue chain is Chaperonin GroEL (548 aa).

Residues 30-33 (TLGP), K51, 87-91 (DGTTT), G415, and D496 contribute to the ATP site. The disordered stretch occupies residues 527-548 (SDKEDAMPPMRGGMGGMGGMDF). Residues 538–548 (GGMGGMGGMDF) are compositionally biased toward gly residues.

Belongs to the chaperonin (HSP60) family. Forms a cylinder of 14 subunits composed of two heptameric rings stacked back-to-back. Interacts with the co-chaperonin GroES.

It localises to the cytoplasm. It catalyses the reaction ATP + H2O + a folded polypeptide = ADP + phosphate + an unfolded polypeptide.. Together with its co-chaperonin GroES, plays an essential role in assisting protein folding. The GroEL-GroES system forms a nano-cage that allows encapsulation of the non-native substrate proteins and provides a physical environment optimized to promote and accelerate protein folding. The chain is Chaperonin GroEL from Rickettsia akari (strain Hartford).